Here is a 267-residue protein sequence, read N- to C-terminus: Zein-alpha Z4 (267 aa).

The first 21 residues, 1-21 (MAAKIFCLIMLLGLSASAATA), serve as a signal peptide directing secretion.

The protein belongs to the zein family.

Zeins are major seed storage proteins. The protein is Zein-alpha Z4 of Zea mays (Maize).